Consider the following 126-residue polypeptide: Small ribosomal subunit protein uS13 (126 aa).

A disordered region spans residues 91 to 126 (HRAGLPVRGQRTRTNSRTRRSAKRTVAGKKKAPSKK). The segment covering 100 to 126 (QRTRTNSRTRRSAKRTVAGKKKAPSKK) has biased composition (basic residues).

This sequence belongs to the universal ribosomal protein uS13 family. In terms of assembly, part of the 30S ribosomal subunit. Forms a loose heterodimer with protein S19. Forms two bridges to the 50S subunit in the 70S ribosome.

In terms of biological role, located at the top of the head of the 30S subunit, it contacts several helices of the 16S rRNA. In the 70S ribosome it contacts the 23S rRNA (bridge B1a) and protein L5 of the 50S subunit (bridge B1b), connecting the 2 subunits; these bridges are implicated in subunit movement. Contacts the tRNAs in the A and P-sites. The polypeptide is Small ribosomal subunit protein uS13 (Acaryochloris marina (strain MBIC 11017)).